Reading from the N-terminus, the 241-residue chain is GLIPR1-like protein 1 (241 aa).

An N-terminal signal peptide occupies residues 1–22 (MILRKKLSYLWTLGLCLVASKS). Residues 39 to 172 (LRLHNEARTN…PDSALLVCNY (134 aa)) enclose the SCP domain. Serine 220 carries GPI-anchor amidated serine lipidation. A propeptide spans 221–241 (GTRQLIACNPLYLISVLLTIF) (removed in mature form).

The protein belongs to the CRISP family. As to quaternary structure, part of a oolemmal binding multimeric complex (IZUMO1 complex) composed at least of IZUMO1 and GLIPR1L1; the complex assemblage is influenced by the maturation status of the male germ cell. Interacts with IZUMO1. In terms of processing, N-glycosylated. N-glycosylation decreases during the transit in the caput. As to expression, highly expressed in testis, where it localizes to round and elongating spermatids and differentiated spermatozoa in the seminiferous tubules and epididymis (at protein level).

The protein resides in the cytoplasmic vesicle. It localises to the secretory vesicle. It is found in the acrosome. Its subcellular location is the cell membrane. The protein localises to the membrane raft. Required for optimal fertilization at the stage of sperm-oocyte fusion, plays a role in optimizing acrosome function, the translocation of IZUMO1 during the acrosome reaction and the fertilization process. Component of epididymosomes, one type of membranous microvesicules which mediate the transfer of lipids and proteins to spermatozoa plasma membrane during epididymal maturation. Also a component of the CD9-positive microvesicules found in the cauda region. This is GLIPR1-like protein 1 from Bos taurus (Bovine).